A 351-amino-acid polypeptide reads, in one-letter code: Adenine deaminase (351 aa).

The Zn(2+) site is built by His-20, His-22, and His-200. Catalysis depends on Glu-203, which acts as the Proton donor. Asp-281 lines the Zn(2+) pocket. Asp-282 serves as a coordination point for substrate.

The protein belongs to the metallo-dependent hydrolases superfamily. Adenosine and AMP deaminases family. Adenine deaminase type 2 subfamily. It depends on Zn(2+) as a cofactor.

The catalysed reaction is adenine + H2O + H(+) = hypoxanthine + NH4(+). Catalyzes the hydrolytic deamination of adenine to hypoxanthine. Plays an important role in the purine salvage pathway and in nitrogen catabolism. This chain is Adenine deaminase, found in Cupriavidus taiwanensis (strain DSM 17343 / BCRC 17206 / CCUG 44338 / CIP 107171 / LMG 19424 / R1) (Ralstonia taiwanensis (strain LMG 19424)).